Reading from the N-terminus, the 448-residue chain is Exodeoxyribonuclease 7 large subunit (448 aa).

The protein belongs to the XseA family. As to quaternary structure, heterooligomer composed of large and small subunits.

The protein localises to the cytoplasm. The catalysed reaction is Exonucleolytic cleavage in either 5'- to 3'- or 3'- to 5'-direction to yield nucleoside 5'-phosphates.. Its function is as follows. Bidirectionally degrades single-stranded DNA into large acid-insoluble oligonucleotides, which are then degraded further into small acid-soluble oligonucleotides. The protein is Exodeoxyribonuclease 7 large subunit of Nitrosomonas europaea (strain ATCC 19718 / CIP 103999 / KCTC 2705 / NBRC 14298).